A 620-amino-acid chain; its full sequence is Glutathione-regulated potassium-efflux system protein KefC (620 aa).

Topologically, residues 1–3 are periplasmic; that stretch reads MDS. A helical transmembrane segment spans residues 4-24; sequence HTLLQALIYLGSAALIVPIAV. Arginine 25 is a topological domain (cytoplasmic). Residues 26-46 traverse the membrane as a helical segment; that stretch reads LGLGSVLGYLIAGCIIGPWGL. At 47-53 the chain is on the periplasmic side; that stretch reads RLVTDAE. Residues 54–74 traverse the membrane as a helical segment; it reads SILHFAEIGVVLMLFVIGLEL. Residues 75 to 89 lie on the Cytoplasmic side of the membrane; that stretch reads DPQRLWKLRASVFGG. The helical transmembrane segment at 90-110 threads the bilayer; the sequence is GALQMGVCGGLIGLFCMFLGL. Residues 111-113 are Periplasmic-facing; sequence RWQ. The helical transmembrane segment at 114–134 threads the bilayer; it reads VAELIGMTLALSSTAIAMQAM. The Cytoplasmic portion of the chain corresponds to 135–148; that stretch reads NERNLTVSQVGRSA. A helical transmembrane segment spans residues 149 to 169; sequence FAVLLFQDIAAIPLVAMIPLL. The Periplasmic segment spans residues 170–177; it reads AASGASTT. A helical transmembrane segment spans residues 178-198; that stretch reads LGAFALSALKVAGALALVVLL. The Cytoplasmic portion of the chain corresponds to 199–213; sequence GRYVTRPALRFVARS. The chain crosses the membrane as a helical span at residues 214-233; sequence GLREVFSAVALFLVFGFGLL. Residues 234-236 are Periplasmic-facing; the sequence is LEE. A helical membrane pass occupies residues 237 to 254; the sequence is VGLSMAMGAFLAGVLLAS. At 255–269 the chain is on the cytoplasmic side; the sequence is SEYRHALESDIEPFK. A helical transmembrane segment spans residues 270–290; the sequence is GLLLGLFFIGVGMSIDFGTLV. Residues 291 to 293 lie on the Periplasmic side of the membrane; the sequence is ENP. A helical membrane pass occupies residues 294–314; that stretch reads LRILLLLAGFLAIKIVMLWLV. The Cytoplasmic segment spans residues 315-326; it reads ARPLGVPAKQRR. A helical membrane pass occupies residues 327–347; it reads WFAVLLGQGSEFAFVVFGAAQ. The Periplasmic segment spans residues 348–358; the sequence is MADVLEPEWAK. A helical membrane pass occupies residues 359 to 379; the sequence is ALTLAVALSMAATPIFLVLLT. Residues 380-620 are Cytoplasmic-facing; it reads RMEKTATGEA…ADEPEVKPSI (241 aa). The region spanning 399-518 is the RCK N-terminal domain; the sequence is QPRVIVAGFG…AGVAMPERET (120 aa). Residues 599–620 are disordered; that stretch reads QGTAEGKHSGEVADEPEVKPSI.

The protein belongs to the monovalent cation:proton antiporter 2 (CPA2) transporter (TC 2.A.37) family. KefC subfamily. As to quaternary structure, homodimer. Interacts with the regulatory subunit KefF.

It is found in the cell inner membrane. Functionally, pore-forming subunit of a potassium efflux system that confers protection against electrophiles. Catalyzes K(+)/H(+) antiport. This Salmonella typhimurium (strain LT2 / SGSC1412 / ATCC 700720) protein is Glutathione-regulated potassium-efflux system protein KefC.